A 247-amino-acid chain; its full sequence is Chalcone--flavanone isomerase (247 aa).

Positions 56, 121, and 198 each coordinate substrate. Over residues 223 to 235 the composition is skewed to basic and acidic residues; that stretch reads ENKVEEDATKTDQ. Residues 223-247 are disordered; the sequence is ENKVEEDATKTDQEEANDLSLAKEN.

It belongs to the chalcone isomerase family.

It carries out the reaction a chalcone = a flavanone.. It functions in the pathway secondary metabolite biosynthesis; flavonoid biosynthesis. In terms of biological role, catalyzes the intramolecular cyclization of bicyclic chalcones into tricyclic (S)-flavanones. Responsible for the isomerization of 4,2',4',6'-tetrahydroxychalcone (also termed chalcone) into naringenin. The chain is Chalcone--flavanone isomerase (CHI) from Raphanus sativus (Radish).